Consider the following 2087-residue polypeptide: Rho GTPase-activating protein 32 (2087 aa).

Residues 131-245 (GSIQLSLSEE…LTWMEIDNKG (115 aa)) form the PX; atypical domain. The region spanning 259 to 321 (PAVGAAHVIK…PGHCVELINQ (63 aa)) is the SH3 domain. Residues 372–567 (CDLGEHLLNS…FILNHVDVLF (196 aa)) enclose the Rho-GAP domain. Ser706, Ser709, Ser732, and Ser738 each carry phosphoserine. The disordered stretch occupies residues 818-858 (FLDSPGYSKDKPSANKKDAETGSSQCQTPGSTASSEPVSPL). Positions 825-837 (SKDKPSANKKDAE) are enriched in basic and acidic residues. A compositionally biased stretch (polar residues) spans 838–854 (TGSSQCQTPGSTASSEP). 3 positions are modified to phosphoserine: Ser852, Ser856, and Ser892. Residues 927–938 (SNTTAQNASSST) are compositionally biased toward low complexity. 3 disordered regions span residues 927–1038 (SNTT…PPKN), 1103–1143 (PAEQ…EQHH), and 1169–1257 (VPLD…ENTS). Phosphoserine is present on Ser952. Composition is skewed to low complexity over residues 994 to 1005 (SVSSSQSKAVAS) and 1019 to 1029 (QDSVPVSSVSL). Over residues 1124–1138 (TTATGDPTHSNTTES) the composition is skewed to polar residues. Positions 1172 to 1182 (DSEKSDDHVSF) are enriched in basic and acidic residues. The span at 1188–1203 (GKNSMPTVSFLDQDQS) shows a compositional bias: polar residues. Ser1203 is subject to Phosphoserine. A compositionally biased stretch (basic and acidic residues) spans 1222-1232 (DKLHHPLEFAD). The tract at residues 1391–1711 (RVPLLHLRAE…YSYAGLAPRP (321 aa)) is interaction with GAB2. 2 positions are modified to asymmetric dimethylarginine: Arg1523 and Arg1533. A Phosphoserine modification is found at Ser1585. Residues 1685–2087 (PNRDFAFYNP…QHPETQIHAE (403 aa)) form an interaction with FYN region. Residues 1798-1896 (PGKTGLLSVA…QFCESKNGPP (99 aa)) are disordered. Basic and acidic residues predominate over residues 1823–1838 (GEDRFYRRHPEAEMDR). Positions 1847–1862 (STQPEKPSLPQKQSSL) are enriched in polar residues. Over residues 1875-1889 (PEHRAHQEASHRQFC) the composition is skewed to basic and acidic residues. The residue at position 2037 (Arg2037) is an Omega-N-methylarginine.

This sequence belongs to the PX domain-containing GAP family. In terms of assembly, interacts with NTRK1 (via cytoplasmic domain); the interaction is independent of the phosphorylation state of NTRK1. Interacts with SHC3 (via SH2 domain). Interacts with RASA1 (via SH3 domain); the interaction is necessary for the Ras activation and cell transforming activities of ARHGAP32. Interacts with GAB1 and GAB2. Interacts with CRK and CRKL. Found in a complex with CRKL and BCAR1; upon EGF stimulation BCAR1 may be replaced by EGFR. Interacts with NCK1 (via SH3 domain); NCK1 recruits phosphorylated BCAR1 to the complex. Isoform 2 interacts with FYN; the interaction appears to be dependent on tyrosine phosphorylation of ARHGAP32. Interacts with EGFR; the interaction requires EGF stimulation and is increased by SHC3. Interacts with CDC42; the interaction requires constitutively active CDC42. Interacts with CTNNB1. Interacts with GRIN2B. Interacts with DLG4 and CDH2. Interacts with GPHN. Post-translationally, isoform 2 is phosphorylated on multiple tyrosine residues by FYN. Phosphorylated tyrosine residues undergo dephosphorylation after stimulation of NMDA receptors. Phosphorylated in vitro by CaMK2 in the presence of calmodulin and calcium; which inhibits GAP activity. In terms of tissue distribution, isoform 1 and isoform 2 are highly expressed in brain and testis. Isoform 1 is also expressed in other tissues such as lung, liver and spleen.

The protein localises to the postsynaptic density. The protein resides in the cell projection. It localises to the dendritic spine. It is found in the cytoplasm. Its subcellular location is the cell cortex. The protein localises to the endosome membrane. The protein resides in the golgi apparatus membrane. It localises to the endoplasmic reticulum membrane. It is found in the membrane. In terms of biological role, GTPase-activating protein (GAP) promoting GTP hydrolysis on RHOA, CDC42 and RAC1 small GTPases. May be involved in the differentiation of neuronal cells during the formation of neurite extensions. Involved in NMDA receptor activity-dependent actin reorganization in dendritic spines. May mediate cross-talks between Ras- and Rho-regulated signaling pathways in cell growth regulation. Isoform 2 has higher GAP activity. This is Rho GTPase-activating protein 32 (ARHGAP32) from Homo sapiens (Human).